Here is a 479-residue protein sequence, read N- to C-terminus: Replication factor C large subunit (479 aa).

43-50 contacts ATP; the sequence is GPPGVGKT. Positions 441 to 479 are disordered; that stretch reads EEKEESVEEVAEEKPEEEREEPRARKKAGKNLTLDSFFS. Residues 452–463 show a composition bias toward basic and acidic residues; the sequence is EEKPEEEREEPR.

Belongs to the activator 1 small subunits family. RfcL subfamily. In terms of assembly, heteropentamer composed of four small subunits (RfcS) and one large subunit (RfcL). Both subunits interact with PCNA.

Its function is as follows. Part of the RFC clamp loader complex which loads the PCNA sliding clamp onto DNA. The complex possesses DNA-dependent ATPase activity which is further stimulated by PCNA. This Archaeoglobus fulgidus (strain ATCC 49558 / DSM 4304 / JCM 9628 / NBRC 100126 / VC-16) protein is Replication factor C large subunit (rfcL).